We begin with the raw amino-acid sequence, 553 residues long: Dihydroxy-acid dehydratase (553 aa).

D78 is a binding site for Mg(2+). C119 contacts [2Fe-2S] cluster. Residues D120 and K121 each coordinate Mg(2+). Position 121 is an N6-carboxylysine (K121). C191 provides a ligand contact to [2Fe-2S] cluster. Residue E444 participates in Mg(2+) binding. Residue S470 is the Proton acceptor of the active site.

The protein belongs to the IlvD/Edd family. As to quaternary structure, homodimer. Requires [2Fe-2S] cluster as cofactor. The cofactor is Mg(2+).

It catalyses the reaction (2R)-2,3-dihydroxy-3-methylbutanoate = 3-methyl-2-oxobutanoate + H2O. The enzyme catalyses (2R,3R)-2,3-dihydroxy-3-methylpentanoate = (S)-3-methyl-2-oxopentanoate + H2O. It functions in the pathway amino-acid biosynthesis; L-isoleucine biosynthesis; L-isoleucine from 2-oxobutanoate: step 3/4. Its pathway is amino-acid biosynthesis; L-valine biosynthesis; L-valine from pyruvate: step 3/4. Functions in the biosynthesis of branched-chain amino acids. Catalyzes the dehydration of (2R,3R)-2,3-dihydroxy-3-methylpentanoate (2,3-dihydroxy-3-methylvalerate) into 2-oxo-3-methylpentanoate (2-oxo-3-methylvalerate) and of (2R)-2,3-dihydroxy-3-methylbutanoate (2,3-dihydroxyisovalerate) into 2-oxo-3-methylbutanoate (2-oxoisovalerate), the penultimate precursor to L-isoleucine and L-valine, respectively. This chain is Dihydroxy-acid dehydratase, found in Methanosarcina barkeri (strain Fusaro / DSM 804).